The following is a 435-amino-acid chain: AP-2 complex subunit mu (435 aa).

The MHD domain occupies 170–434 (RNELFLDVLE…IGRSGIYETR (265 aa)). A 1,2-diacyl-sn-glycero-3-phospho-(1D-myo-inositol-3,4,5-trisphosphate) is bound by residues Lys-341, Lys-345, and Lys-354.

It belongs to the adaptor complexes medium subunit family. As to quaternary structure, adaptor protein complex 2 (AP-2) is a heterotetramer composed of two large adaptins (alpha-type subunit and beta-type subunit), a medium adaptin (mu-type subunit) and a small adaptin (sigma-type subunit).

It localises to the cell membrane. Its subcellular location is the membrane. The protein resides in the coated pit. Its function is as follows. Component of the adaptor complexes which link clathrin to receptors in coated vesicles. Clathrin-associated protein complexes are believed to interact with the cytoplasmic tails of membrane proteins, leading to their selection and concentration. AP50 is a subunit of the plasma membrane adaptor. The complex binds polyphosphoinositide-containing lipids. The polypeptide is AP-2 complex subunit mu (ap2m1) (Xenopus tropicalis (Western clawed frog)).